A 189-amino-acid polypeptide reads, in one-letter code: dCTP deaminase (189 aa).

DCTP-binding positions include 112 to 117 (KSTYAR), 136 to 138 (TLE), glutamine 157, tyrosine 171, and glutamine 181. Glutamate 138 serves as the catalytic Proton donor/acceptor.

It belongs to the dCTP deaminase family. In terms of assembly, homotrimer.

The catalysed reaction is dCTP + H2O + H(+) = dUTP + NH4(+). It functions in the pathway pyrimidine metabolism; dUMP biosynthesis; dUMP from dCTP (dUTP route): step 1/2. Its function is as follows. Catalyzes the deamination of dCTP to dUTP. This is dCTP deaminase from Acinetobacter baumannii (strain SDF).